The sequence spans 113 residues: Carboxysome shell protein CcmK4 (113 aa).

Residues 5 to 91 form the BMC domain; that stretch reads AIGSLETKGF…PHENVEAVFP (87 aa).

Belongs to the bacterial microcompartments protein family. CcmK subfamily. In terms of assembly, homohexamer. Interacts stably with CcmK3, probably forms heterohexamers with a 1:2 CcmK3:CcmK4 stoichiometry.

The protein resides in the carboxysome. In terms of biological role, one of the shell proteins of the carboxysome, a polyhedral inclusion where RuBisCO (ribulose bisphosphate carboxylase, rbcL-rbcS) is sequestered. Assembles into hexamers which make sheets that form the facets of the polyhedral carboxysome. The hexamer central pore probably regulates metabolite flux. Its function is as follows. A minor shell protein of the carboxysome, a polyhedral inclusion where RuBisCO (ribulose bisphosphate carboxylase, rbcL-rbcS) is sequestered. Hexamers form sheets that form the facets of the polyhedral carboxysome. The shell is 4.5 nm thick, as observed for CcmK proteins. In PCC 7942 there are several CcmK paralogs with presumably functional differences; replacing the central pore residues (34-37) with those of CcmK2 from this organism (Tyr-Glu-Lys-Ile) allows the bacterium to make carboxysomes, but the expression level is too low to know if the carboxysome is functional for CO(2) fixation. This subunit probably makes both homohexamers and heterohexamers with CcmK3. The CcmK3-CcmK4 heterohexmers have been suggested to cap other hexamers, perhaps to alter metabolite flux. This chain is Carboxysome shell protein CcmK4, found in Synechococcus elongatus (strain ATCC 33912 / PCC 7942 / FACHB-805) (Anacystis nidulans R2).